The following is a 98-amino-acid chain: MSKQSFDFKRYKPEAPSGSRKRPLKKFKKPIRIKSEDQINYKNVSLINGFISQRAKILSRKVTKLTWKQQRLMSVAIKRARILSLLPFIVKTKFKKLY.

Positions 1 to 13 are enriched in basic and acidic residues; that stretch reads MSKQSFDFKRYKP. Positions 1–26 are disordered; the sequence is MSKQSFDFKRYKPEAPSGSRKRPLKK.

It belongs to the bacterial ribosomal protein bS18 family. In terms of assembly, part of the 30S ribosomal subunit.

The protein localises to the plastid. It localises to the chloroplast. The polypeptide is Small ribosomal subunit protein bS18c (Gnetum parvifolium (Small-leaved jointfir)).